We begin with the raw amino-acid sequence, 66 residues long: Dermaseptin PD-3-7 (66 aa).

Positions Met-1–Cys-22 are cleaved as a signal peptide. The propeptide occupies Glu-23–Glu-40.

In terms of tissue distribution, expressed by the skin glands.

Its subcellular location is the secreted. Its function is as follows. Possesses a potent antimicrobial activity against Gram-positive and Gram-negative bacteria. Probably acts by disturbing membrane functions with its amphipathic structure. This chain is Dermaseptin PD-3-7, found in Agalychnis dacnicolor (Giant Mexican leaf frog).